The chain runs to 400 residues: Phosphoglycerate kinase (400 aa).

Substrate contacts are provided by residues 23-25 (DLN), Arg-38, 61-64 (HFGR), Arg-120, and Arg-153. ATP-binding positions include Lys-203, Glu-325, and 355-358 (GGDT).

Belongs to the phosphoglycerate kinase family. As to quaternary structure, monomer.

It is found in the cytoplasm. It catalyses the reaction (2R)-3-phosphoglycerate + ATP = (2R)-3-phospho-glyceroyl phosphate + ADP. The protein operates within carbohydrate degradation; glycolysis; pyruvate from D-glyceraldehyde 3-phosphate: step 2/5. The sequence is that of Phosphoglycerate kinase from Allorhizobium ampelinum (strain ATCC BAA-846 / DSM 112012 / S4) (Agrobacterium vitis (strain S4)).